We begin with the raw amino-acid sequence, 396 residues long: MQTRAPWSLPEATLAYFPNARFVSSDRDLGAGAAPGIAASRSTACQTWGGITVADPGSGPTGFGHVPVLAQRCFELLTPALTRYYPDGSQAVLLDATIGAGGHAERFLEGLPGLRLIGLDRDPTALDVARSRLVRFADRLTLVHTRYDCLGAALAESGYAAVGSVDGILFDLGVSSMQLDRAERGFAYATDAPLDMRMDPTTPLTAADIVNTYDEAALADILRRYGEERFARRIAAGIVRRRAKTPFTSTAELVALLYQAIPAPARRVGGHPAKRTFQALRIAVNDELESLRTAVPAALDALAIGGRIAVLAYQSLEDRIVKRVFAEAVASATPAGLPVELPGHEPRFRSLTHGAERASVAEIERNPRSTPVRLRALQRVEHRAQSQQWATEKGDS.

S-adenosyl-L-methionine contacts are provided by residues 101 to 103, Asp120, Tyr147, Asp171, and Gln178; that span reads GGH.

It belongs to the methyltransferase superfamily. RsmH family.

The protein resides in the cytoplasm. It carries out the reaction cytidine(1402) in 16S rRNA + S-adenosyl-L-methionine = N(4)-methylcytidine(1402) in 16S rRNA + S-adenosyl-L-homocysteine + H(+). In terms of biological role, specifically methylates the N4 position of cytidine in position 1402 (C1402) of 16S rRNA. This Mycobacterium bovis (strain ATCC BAA-935 / AF2122/97) protein is Ribosomal RNA small subunit methyltransferase H.